Consider the following 567-residue polypeptide: NADH-ubiquinone oxidoreductase chain 2 (567 aa).

Transmembrane regions (helical) follow at residues 2–22 (LILSLFILIIYSSIINNIDTI), 43–63 (IGIIIILYSLYIFKDISLSYI), 85–105 (NIFNIYIIFLLLIVIISLLSI), 133–153 (LNIYYISIIIFNIIGLILLLT), 158–178 (ISIFISIELQSYSLYILTGII), 189–209 (LFYYLIGGIGSIIILYGISLL), 236–256 (ILIGWLFIIIGLLIKIGAAPM), 274–294 (YISLIPKISILSYILLIILNL), 312–332 (LIYILSIIIILSLIIGSIGGL), 340–360 (ILAYSGLLNIGYFLLIILSLI), 372–392 (IIYITQYCFNHISIFILLIIA), 423–443 (LIFCLIIIIGSFIGIPPLFGF), 459–479 (LFLSLLLIISSIISSIYYLYF), and 530–550 (VGNYITYILSSYILIILFNFI).

It belongs to the complex I subunit 2 family.

It localises to the mitochondrion inner membrane. It catalyses the reaction a ubiquinone + NADH + 5 H(+)(in) = a ubiquinol + NAD(+) + 4 H(+)(out). Core subunit of the mitochondrial membrane respiratory chain NADH dehydrogenase (Complex I) that is believed to belong to the minimal assembly required for catalysis. Complex I functions in the transfer of electrons from NADH to the respiratory chain. The immediate electron acceptor for the enzyme is believed to be ubiquinone. In Wickerhamomyces canadensis (Yeast), this protein is NADH-ubiquinone oxidoreductase chain 2 (ND2).